The chain runs to 265 residues: Protein B8 (265 aa).

The polypeptide is Protein B8 (B8) (Homo sapiens (Human)).